The primary structure comprises 141 residues: Hemoglobin subunit alpha (141 aa).

The region spanning V1 to R141 is the Globin domain. S3 carries the phosphoserine modification. K7 carries the N6-succinyllysine modification. Position 8 is a phosphothreonine (T8). Position 11 is an N6-succinyllysine (K11). An N6-acetyllysine; alternate modification is found at K16. The residue at position 16 (K16) is an N6-succinyllysine; alternate. Y24 carries the post-translational modification Phosphotyrosine. S35 carries the post-translational modification Phosphoserine. At K40 the chain carries N6-succinyllysine. S49 is modified (phosphoserine). H58 provides a ligand contact to O2. H87 contributes to the heme b binding site. S102 is subject to Phosphoserine. Phosphothreonine is present on T108. S124 and S131 each carry phosphoserine. Residue T134 is modified to Phosphothreonine. S138 carries the phosphoserine modification.

It belongs to the globin family. Heterotetramer of two alpha chains and two beta chains. As to expression, red blood cells.

Involved in oxygen transport from the lung to the various peripheral tissues. In terms of biological role, hemopressin acts as an antagonist peptide of the cannabinoid receptor CNR1. Hemopressin-binding efficiently blocks cannabinoid receptor CNR1 and subsequent signaling. The polypeptide is Hemoglobin subunit alpha (HBA) (Myotis velifer (Mouse-eared bat)).